Reading from the N-terminus, the 364-residue chain is MTIASTASPVPAAAGLDRQSRNRRALRLWLGLVILALFALVLVGGATRLTNSGLSITQWKPIHGVIPPLNAAEWEEEFKLYQQIPQYELVNKGMTVEAFKTIFWWEWAHRFLARSIGVIFALPLVFFWATGRIEKRLRWPLVGILALGGFQGFIGWWMVSSGLSERTEVSQYRLATHLVTACLIFSACVWVMRGLARHSADPAPTAHSRHWAIALLCLVLFQIYLGALVAGLDAGMSYNTWPLMDGALIPGDLLVQQPVWLNFFENPKTVQFVHRIGAYTVLLVALYHMVSSLRAAPGTTHARRSVVLFAIVCCQAVLGISALLLQVPLDAALAHQGGALILLGFTVAHLRGFYGAYPLPKPVA.

Transmembrane regions (helical) follow at residues 25 to 45 (ALRLWLGLVILALFALVLVGG), 111 to 131 (FLARSIGVIFALPLVFFWATG), 139 to 159 (WPLVGILALGGFQGFIGWWMV), 174 to 194 (LATHLVTACLIFSACVWVMRG), 212 to 232 (AIALLCLVLFQIYLGALVAGL), 270 to 290 (VQFVHRIGAYTVLLVALYHMV), 305 to 325 (SVVLFAIVCCQAVLGISALLL), and 327 to 347 (VPLDAALAHQGGALILLGFTV). His-274 lines the heme pocket. A heme-binding site is contributed by His-335.

It belongs to the COX15/CtaA family. Type 2 subfamily. In terms of assembly, interacts with CtaB. Heme b serves as cofactor.

Its subcellular location is the cell membrane. The enzyme catalyses Fe(II)-heme o + 2 A + H2O = Fe(II)-heme a + 2 AH2. Its pathway is porphyrin-containing compound metabolism; heme A biosynthesis; heme A from heme O: step 1/1. In terms of biological role, catalyzes the conversion of heme O to heme A by two successive hydroxylations of the methyl group at C8. The first hydroxylation forms heme I, the second hydroxylation results in an unstable dihydroxymethyl group, which spontaneously dehydrates, resulting in the formyl group of heme A. In Allorhizobium ampelinum (strain ATCC BAA-846 / DSM 112012 / S4) (Agrobacterium vitis (strain S4)), this protein is Heme A synthase.